Reading from the N-terminus, the 415-residue chain is Probable tRNA pseudouridine synthase D (415 aa).

Residue D83 is the Nucleophile of the active site. A TRUD domain is found at G158–R378.

Belongs to the pseudouridine synthase TruD family.

The enzyme catalyses uridine(13) in tRNA = pseudouridine(13) in tRNA. Its function is as follows. Could be responsible for synthesis of pseudouridine from uracil-13 in transfer RNAs. This Thermococcus gammatolerans (strain DSM 15229 / JCM 11827 / EJ3) protein is Probable tRNA pseudouridine synthase D.